Consider the following 980-residue polypeptide: SLIT and NTRK-like protein 3 (980 aa).

A signal peptide spans 1-27 (MMKPSIAEMLHRGRMLWIILLSTIALG). Over 30-655 (TPIPLIEDSE…SPPGGPVPLS (626 aa)) the chain is Extracellular. N-linked (GlcNAc...) asparagine glycosylation occurs at asparagine 69. 6 LRR repeats span residues 79 to 100 (RPFK…SFLH), 103 to 124 (NAVS…AFNG), 127 to 148 (ILKR…TFLG), 151 to 172 (SLEY…AFRN), 175 to 196 (KLRV…LFKA), and 198 to 219 (SLTH…GMLD). The region spanning 233 to 284 (NPWNCTCEIVQLKSWLERIPYTALVGDITCETPFHFHGKDLREIKKTELCPL) is the LRRCT 1 domain. The disordered stretch occupies residues 326–361 (EYKSSNKQPKPTKQPRTPRPPSTSQALYPGPNQPPI). Residues 365–407 (QTRPPIPIICPTGCTCNLHINDLGLTVNCKERGFNNISELLPR) form the LRRNT domain. LRR repeat units follow at residues 410–431 (NAKK…DFWN), 434–455 (SLDL…AFIN), 458–479 (NLKS…MFRG), 482–503 (SLHY…AFSL), 506–527 (NLKL…AFAG), and 529–550 (SLAR…GVLE). The LRRCT 2 domain maps to 563–614 (NPWDCTCDLVPFKQWIETISSVSVVGDVLCRTPENLTHRDVRTIELEVLCPE). A glycan (N-linked (GlcNAc...) asparagine) is linked at asparagine 597. The interval 622–644 (GPSPPQPGDYHPNGGPTSASPYE) is disordered. Residues 656–676 (VLILSLLVLFFSAVFVAAGLF) form a helical membrane-spanning segment. Residues 677 to 980 (AYVLRRRRKK…EVLEKTAYRF (304 aa)) lie on the Cytoplasmic side of the membrane. 2 disordered regions span residues 709–735 (LFED…EKAP) and 762–785 (EEEV…GTQP). A compositionally biased stretch (gly residues) spans 715–725 (GNSGGSGGGGR).

Belongs to the SLITRK family. In terms of tissue distribution, broadly expressed in embryonic brain with highest expression in cortical plate, pyramidal cell layer of the hippocampus, thalamus and hypothalamus.

Its subcellular location is the membrane. In terms of biological role, suppresses neurite outgrowth. The polypeptide is SLIT and NTRK-like protein 3 (Slitrk3) (Mus musculus (Mouse)).